Here is a 179-residue protein sequence, read N- to C-terminus: UPF0227 protein Shewmr4_1727 (179 aa).

The protein belongs to the UPF0227 family.

The polypeptide is UPF0227 protein Shewmr4_1727 (Shewanella sp. (strain MR-4)).